The chain runs to 156 residues: Crossover junction endodeoxyribonuclease RuvC (156 aa).

Active-site residues include D7, E66, and D138. Mg(2+) is bound by residues D7, E66, and D138.

This sequence belongs to the RuvC family. In terms of assembly, homodimer which binds Holliday junction (HJ) DNA. The HJ becomes 2-fold symmetrical on binding to RuvC with unstacked arms; it has a different conformation from HJ DNA in complex with RuvA. In the full resolvosome a probable DNA-RuvA(4)-RuvB(12)-RuvC(2) complex forms which resolves the HJ. Mg(2+) is required as a cofactor.

It is found in the cytoplasm. It catalyses the reaction Endonucleolytic cleavage at a junction such as a reciprocal single-stranded crossover between two homologous DNA duplexes (Holliday junction).. Its function is as follows. The RuvA-RuvB-RuvC complex processes Holliday junction (HJ) DNA during genetic recombination and DNA repair. Endonuclease that resolves HJ intermediates. Cleaves cruciform DNA by making single-stranded nicks across the HJ at symmetrical positions within the homologous arms, yielding a 5'-phosphate and a 3'-hydroxyl group; requires a central core of homology in the junction. The consensus cleavage sequence is 5'-(A/T)TT(C/G)-3'. Cleavage occurs on the 3'-side of the TT dinucleotide at the point of strand exchange. HJ branch migration catalyzed by RuvA-RuvB allows RuvC to scan DNA until it finds its consensus sequence, where it cleaves and resolves the cruciform DNA. This chain is Crossover junction endodeoxyribonuclease RuvC, found in Ehrlichia canis (strain Jake).